The sequence spans 366 residues: Tetraacyldisaccharide 4'-kinase (366 aa).

Residue 65–72 (TVGGTGKT) participates in ATP binding. Residues 343-366 (AKSTPASGGATGLNKEHQDGQPAA) are disordered. Over residues 356–366 (NKEHQDGQPAA) the composition is skewed to basic and acidic residues.

The protein belongs to the LpxK family.

It catalyses the reaction a lipid A disaccharide + ATP = a lipid IVA + ADP + H(+). It functions in the pathway glycolipid biosynthesis; lipid IV(A) biosynthesis; lipid IV(A) from (3R)-3-hydroxytetradecanoyl-[acyl-carrier-protein] and UDP-N-acetyl-alpha-D-glucosamine: step 6/6. Functionally, transfers the gamma-phosphate of ATP to the 4'-position of a tetraacyldisaccharide 1-phosphate intermediate (termed DS-1-P) to form tetraacyldisaccharide 1,4'-bis-phosphate (lipid IVA). The polypeptide is Tetraacyldisaccharide 4'-kinase (Cupriavidus pinatubonensis (strain JMP 134 / LMG 1197) (Cupriavidus necator (strain JMP 134))).